Here is a 164-residue protein sequence, read N- to C-terminus: UPF0262 protein Xaut_1232 (164 aa).

Belongs to the UPF0262 family.

This chain is UPF0262 protein Xaut_1232, found in Xanthobacter autotrophicus (strain ATCC BAA-1158 / Py2).